We begin with the raw amino-acid sequence, 113 residues long: MEERPPIPNIKNTVAKRKSTSWLLRCHQLGRPKFFKAGSLVVKLVVASPPFWRLSVILNAQNKKPIPTKISTIPKTIKRTRAFSMRIQPFRTFSVWIWFEKTPYYNSIQFSAF.

This is an uncharacterized protein from Mycoplasma pneumoniae (strain ATCC 29342 / M129 / Subtype 1) (Mycoplasmoides pneumoniae).